Consider the following 103-residue polypeptide: Thioredoxin-1 (103 aa).

Positions 2–103 (VTQFKTASEF…AIKQAIAANA (102 aa)) constitute a Thioredoxin domain. Active-site nucleophile residues include C30 and C33. A disulfide bridge links C30 with C33. Residues K54, K66, and K96 each participate in a glycyl lysine isopeptide (Lys-Gly) (interchain with G-Cter in ubiquitin) cross-link.

This sequence belongs to the thioredoxin family. Monomer. Part of the heterodimeric LMA1 complex together with the proteinase inhibitor PBI2. Most of the thioredoxin of yeast is in this complex rather than the well-studied monomer. LMA1 binds to the ATPase SEC18. Post-translationally, reversible disulfide bond formation between Cys-30 and Cys-33, reverted by thioredoxin reductase TRR1 using NADPH as hydrogen donor.

Its subcellular location is the nucleus. It localises to the cytoplasm. The protein localises to the golgi apparatus membrane. The protein resides in the mitochondrion intermembrane space. Participates as a hydrogen donor in redox reactions through the reversible oxidation of its active center dithiol to a disulfide, accompanied by the transfer of 2 electrons and 2 protons. It is involved in many cellular processes, including deoxyribonucleotide synthesis, repair of oxidatively damaged proteins, protein folding, sulfur metabolism, and redox homeostasis. Thioredoxin-dependent enzymes include phosphoadenosine-phosphosulfate reductase MET16, alkyl-hydroperoxide reductase DOT5, thioredoxin peroxidases TSA1 and TSA2, alkyl hydroperoxide reductase AHP1, and peroxiredoxin HYR1. Thioredoxin is also involved in protection against reducing stress. As part of the LMA1 complex, it is involved in the facilitation of vesicle fusion such as homotypic vacuole and ER-derived COPII vesicle fusion with the Golgi. This activity does not require the redox mechanism. The sequence is that of Thioredoxin-1 (TRX1) from Saccharomyces cerevisiae (strain ATCC 204508 / S288c) (Baker's yeast).